A 744-amino-acid polypeptide reads, in one-letter code: Spalt-like protein sem-4 (744 aa).

The disordered stretch occupies residues 6-32 (AEMAAVSSRRKQSKPRRMSGEGDAMMS). The span at 13–22 (SRRKQSKPRR) shows a compositional bias: basic residues. C2H2-type zinc fingers lie at residues 99-124 (SSCP…LDAH), 305-327 (NQCI…YRTH), 333-355 (FKCK…MGVH), and 411-433 (QQCP…ITEH). A compositionally biased stretch (polar residues) spans 487–497 (KNDSSPNTDTS). Disordered stretches follow at residues 487 to 530 (KNDS…RQDI) and 542 to 562 (KLEE…PKNE). Residues 499–509 (VEEKITRDDPP) show a composition bias toward basic and acidic residues. Residues 513–525 (SLSPSNSSDSSSS) are compositionally biased toward low complexity. Polar residues predominate over residues 551 to 561 (QQVSTTPNPKN). C2H2-type zinc fingers lie at residues 589 to 611 (HQCG…MRTH), 617 to 639 (FKCD…MGTH), and 701 to 723 (TVCS…LKEH). The segment at 725 to 744 (NNGSSAAPTPLASAATPPPS) is disordered. The span at 728-744 (SSAAPTPLASAATPPPS) shows a compositional bias: low complexity.

This sequence belongs to the sal C2H2-type zinc-finger protein family.

The protein localises to the nucleus. Its function is as follows. Transcription factor, involved in positive and negative modulation of transcription. Binds to multiple DNA sequence motifs in the regulatory elements of target genes, including homeobox selector egl-5 and LIM homeobox mec-3. Involved in cell-fate regulation in multiple lineages, including neuronal, mesodermal and vulval. Required to regulate the fate of PLM touch receptor neurons, acting via negative modulation of transcription of egl-5 and mec-3. May modulate gene expression by interacting with different transcription factors during neuronal and mesodermal cell development. Promotes the proliferative sex myoblast (SM) fate, in a cell autonomous manner, acting via the SoxC transcription factor sem-2. Involved in vulval cell-fate determination, acting by regulating expression of homeobox protein lin-39, and may link lin-39 to incoming signaling pathways. Plays a role in detoxification of reactive oxygen species (ROS), by regulating expression of transcription factor skn-1 and the phase II detoxification genes. In Caenorhabditis elegans, this protein is Spalt-like protein sem-4.